Here is a 498-residue protein sequence, read N- to C-terminus: Lysine--tRNA ligase (498 aa).

Mg(2+) contacts are provided by E408 and E415.

This sequence belongs to the class-II aminoacyl-tRNA synthetase family. In terms of assembly, homodimer. Mg(2+) serves as cofactor.

The protein localises to the cytoplasm. It catalyses the reaction tRNA(Lys) + L-lysine + ATP = L-lysyl-tRNA(Lys) + AMP + diphosphate. This chain is Lysine--tRNA ligase, found in Listeria monocytogenes serovar 1/2a (strain ATCC BAA-679 / EGD-e).